A 367-amino-acid polypeptide reads, in one-letter code: Histone RNA hairpin-binding protein (367 aa).

Positions 1 to 12 are enriched in polar residues; that stretch reads MAQKTPTKGTRS. 2 disordered regions span residues 1 to 24 and 49 to 200; these read MAQK…SPIK and EVTE…HWEE. Residues 57–73 show a composition bias toward basic and acidic residues; the sequence is LASRLEEERRCKSESRR. Polar residues predominate over residues 147–156; that stretch reads SNASTINEGA. Residues 183 to 192 are compositionally biased toward low complexity; the sequence is SDSSSVASSP. Residues 206–275 are RNA-binding; that stretch reads CTDEAVLKRR…KWKRSLYEYC (70 aa). The segment at 342-367 is disordered; it reads MDESTLKASTNTDPSAPTDFSKMSSH. Polar residues predominate over residues 347-356; that stretch reads LKASTNTDPS.

The protein belongs to the SLBP family. Ubiquitinated by the CBC(fem-1) (Cul2-ElonginB-ElonginC) E3 ubiquitin-protein ligase complex, leading to its degradation.

Functionally, involved in histone pre-mRNA 3' processing. Required for chromosome condensation, progression of cell death and morphogenesis. This Caenorhabditis elegans protein is Histone RNA hairpin-binding protein (cdl-1).